A 623-amino-acid polypeptide reads, in one-letter code: DNA-directed RNA polymerase subunit gamma (623 aa).

Residues Cys70, Cys72, Cys85, and Cys88 each coordinate Zn(2+). Mg(2+) is bound by residues Asp466, Asp468, and Asp470.

Belongs to the RNA polymerase beta' chain family. RpoC1 subfamily. In terms of assembly, in cyanobacteria the RNAP catalytic core is composed of 2 alpha, 1 beta, 1 beta', 1 gamma and 1 omega subunit. When a sigma factor is associated with the core the holoenzyme is formed, which can initiate transcription. It depends on Mg(2+) as a cofactor. Zn(2+) serves as cofactor.

The catalysed reaction is RNA(n) + a ribonucleoside 5'-triphosphate = RNA(n+1) + diphosphate. In terms of biological role, DNA-dependent RNA polymerase catalyzes the transcription of DNA into RNA using the four ribonucleoside triphosphates as substrates. This is DNA-directed RNA polymerase subunit gamma from Acaryochloris marina (strain MBIC 11017).